The primary structure comprises 255 residues: 3-dehydroquinate dehydratase (255 aa).

3-dehydroquinate contacts are provided by residues 47–49 and R83; that span reads EWR. Catalysis depends on H144, which acts as the Proton donor/acceptor. The Schiff-base intermediate with substrate role is filled by K171. 3 residues coordinate 3-dehydroquinate: R214, S233, and Q237.

This sequence belongs to the type-I 3-dehydroquinase family. Homodimer.

The catalysed reaction is 3-dehydroquinate = 3-dehydroshikimate + H2O. The protein operates within metabolic intermediate biosynthesis; chorismate biosynthesis; chorismate from D-erythrose 4-phosphate and phosphoenolpyruvate: step 3/7. Involved in the third step of the chorismate pathway, which leads to the biosynthesis of aromatic amino acids. Catalyzes the cis-dehydration of 3-dehydroquinate (DHQ) and introduces the first double bond of the aromatic ring to yield 3-dehydroshikimate. The polypeptide is 3-dehydroquinate dehydratase (Alkaliphilus oremlandii (strain OhILAs) (Clostridium oremlandii (strain OhILAs))).